Consider the following 145-residue polypeptide: Transcription antitermination protein NusB (145 aa).

It belongs to the NusB family.

Involved in transcription antitermination. Required for transcription of ribosomal RNA (rRNA) genes. Binds specifically to the boxA antiterminator sequence of the ribosomal RNA (rrn) operons. The protein is Transcription antitermination protein NusB of Burkholderia ambifaria (strain MC40-6).